Here is a 173-residue protein sequence, read N- to C-terminus: Probable capsid assembly scaffolding protein (173 aa).

Low complexity predominate over residues 1-13; sequence MSDNPTPESTPEA. Positions 1-27 are disordered; the sequence is MSDNPTPESTPEAETPEVEKPMEPQGK. The stretch at 36 to 84 forms a coiled coil; sequence SLRQEAAAARVAKKDAVEAAEARVKAEYEAKLAERDTAYTELQNQLGQA. The disordered stretch occupies residues 134–158; sequence GNKTPSPAFDPSQGRGGKPPIPLNG.

Belongs to the L5likevirus scaffolding protein family.

Scaffolding protein involved in the icosahedric procapsid assembly. Coassembles with the capsid proteins to form the procapsid, in which the scaffolding protein is found within the external shell of icosahedrally arranged capsid protein subunits. In Mycobacterium (Mycobacteriophage L5), this protein is Probable capsid assembly scaffolding protein (16).